A 130-amino-acid chain; its full sequence is Small ribosomal subunit protein uS8 (130 aa).

The protein belongs to the universal ribosomal protein uS8 family. Part of the 30S ribosomal subunit. Contacts proteins S5 and S12.

One of the primary rRNA binding proteins, it binds directly to 16S rRNA central domain where it helps coordinate assembly of the platform of the 30S subunit. The protein is Small ribosomal subunit protein uS8 of Erwinia tasmaniensis (strain DSM 17950 / CFBP 7177 / CIP 109463 / NCPPB 4357 / Et1/99).